The following is a 453-amino-acid chain: Macrophage scavenger receptor types I and II (453 aa).

The Cytoplasmic segment spans residues 1–50; sequence MAQWDDFPDQQEDTDSCTESVKFDARSVTALLPPHPKNGPTLQERMKSYK. Residue serine 27 is modified to Phosphoserine. A helical; Signal-anchor for type II membrane protein transmembrane segment spans residues 51–76; it reads TALITLYLIVFVVLVPIIGIVAAQLL. The spacer stretch occupies residues 77–108; sequence KWETKNCTVGSVNADISPSPEGKGNGSEDEMR. Residues 77–453 are Extracellular-facing; it reads KWETKNCTVG…DEDAGVTCTT (377 aa). N-linked (GlcNAc...) asparagine glycosylation is found at asparagine 82, asparagine 101, asparagine 142, asparagine 183, asparagine 220, asparagine 248, and asparagine 266. Residues 194 to 255 are a coiled coil; that stretch reads ETLNGRVQEN…LNNITNDLRL (62 aa). Disordered stretches follow at residues 267-295 and 313-349; these read ITLL…PGFP and PGVR…QRQS. The Collagen-like domain occupies 272-343; it reads GPPGPPGEKG…KGQKGEKGSG (72 aa). The SRCR domain occupies 352–452; it reads VRLVGGSGPH…HDEDAGVTCT (101 aa). 3 disulfides stabilise this stretch: cysteine 377–cysteine 441, cysteine 390–cysteine 451, and cysteine 421–cysteine 431.

In terms of assembly, homotrimer. Interacts with MYO18A.

It localises to the membrane. In terms of biological role, membrane glycoproteins implicated in the pathologic deposition of cholesterol in arterial walls during atherogenesis. Two types of receptor subunits exist. These receptors mediate the endocytosis of a diverse group of macromolecules, including modified low density lipoproteins (LDL). This Bos taurus (Bovine) protein is Macrophage scavenger receptor types I and II (MSR1).